We begin with the raw amino-acid sequence, 60 residues long: Large ribosomal subunit protein uL30 (60 aa).

This sequence belongs to the universal ribosomal protein uL30 family. In terms of assembly, part of the 50S ribosomal subunit.

The sequence is that of Large ribosomal subunit protein uL30 from Agathobacter rectalis (strain ATCC 33656 / DSM 3377 / JCM 17463 / KCTC 5835 / VPI 0990) (Eubacterium rectale).